A 742-amino-acid chain; its full sequence is Mechanosensitive ion channel protein 9 (742 aa).

The segment at 1-117 (MAERRVSNGE…REENGGRSLR (117 aa)) is disordered. The span at 17–26 (SDKEDSKDPR) shows a compositional bias: basic and acidic residues. A phosphoserine mark is found at Ser28 and Ser36. The segment covering 105 to 117 (DSTREENGGRSLR) has biased composition (basic and acidic residues). Phosphoserine occurs at positions 142 and 145. 6 consecutive transmembrane segments (helical) span residues 180–200 (AFLE…SLTI), 221–241 (MVTL…VFII), 261–281 (NVQV…LFDG), 292–312 (FLDF…LFLV), 524–544 (LITG…LDIA), and 559–579 (LAFM…FVFV).

This sequence belongs to the MscS (TC 1.A.23) family. In terms of tissue distribution, detected in the epidermis, cortex, and endodermis of the root tip.

The protein resides in the cell membrane. Functionally, mechanosensitive channel that opens in response to stretch forces in the membrane lipid bilayer. The protein is Mechanosensitive ion channel protein 9 (MSL9) of Arabidopsis thaliana (Mouse-ear cress).